The chain runs to 390 residues: Methionyl-tRNA formyltransferase, mitochondrial (390 aa).

Residues 1–33 (MRVLLRCCCGHLPVGGGAGRRSNPRWRALARLS) constitute a mitochondrion transit peptide.

It belongs to the Fmt family.

Its subcellular location is the mitochondrion. The catalysed reaction is L-methionyl-tRNA(fMet) + (6R)-10-formyltetrahydrofolate = N-formyl-L-methionyl-tRNA(fMet) + (6S)-5,6,7,8-tetrahydrofolate + H(+). Methionyl-tRNA formyltransferase that formylates methionyl-tRNA in mitochondria and is crucial for translation initiation. This chain is Methionyl-tRNA formyltransferase, mitochondrial (MTFMT), found in Bos taurus (Bovine).